Here is a 275-residue protein sequence, read N- to C-terminus: MHAVQRQIAEQLKVQPPFADQNALQAEVARRVNFIKECLQNARLKTLVLGISGGVDSLTAGLLAQRAVKELRESTGDNAYRFIAVRLPYVVQADEHEAQASVDFIEPDERHTINIGSSVKALAAEVKAFDGLPATSVDFVLGNTKARMRMVAQYTVAGAYHGLVIGTDHAAEAVMGFFTKFGDGACDLAPLSGLVKNQVRAIARHFGAPESLVEKVPTADLEDLSPGKPDEASHGVTYAEIDAFLHGEPVREEAFRIICETYAKTQHKRELPYAP.

50-57 (GISGGVDS) provides a ligand contact to ATP. Asp-56 contributes to the Mg(2+) binding site. Arg-147 contacts deamido-NAD(+). Thr-167 contacts ATP. A Mg(2+)-binding site is contributed by Glu-172. Deamido-NAD(+) contacts are provided by Lys-180 and Asp-187. Positions 196 and 218 each coordinate ATP. 267-268 (HK) contributes to the deamido-NAD(+) binding site.

The protein belongs to the NAD synthetase family. In terms of assembly, homodimer.

It catalyses the reaction deamido-NAD(+) + NH4(+) + ATP = AMP + diphosphate + NAD(+) + H(+). The protein operates within cofactor biosynthesis; NAD(+) biosynthesis; NAD(+) from deamido-NAD(+) (ammonia route): step 1/1. Catalyzes the ATP-dependent amidation of deamido-NAD to form NAD. Uses ammonia as a nitrogen source. The chain is NH(3)-dependent NAD(+) synthetase from Pseudomonas syringae pv. syringae (strain B728a).